We begin with the raw amino-acid sequence, 24 residues long: Lectin (24 aa).

It belongs to the leguminous lectin family. As to quaternary structure, homotetramer.

Its function is as follows. Agglutinates erythrocytes of blood group A. Binds in decreasing order of affinity: N-acetyl-D-galactosamine, D-galactose, and D-galactosamine. In Crotalaria pallida (Smooth rattlebox), this protein is Lectin.